A 388-amino-acid polypeptide reads, in one-letter code: Processive diacylglycerol beta-glucosyltransferase (388 aa).

It belongs to the glycosyltransferase 28 family. UgtP subfamily.

The protein localises to the cell membrane. It carries out the reaction a 1,2-diacyl-3-O-(beta-D-glucopyranosyl)-sn-glycerol + UDP-alpha-D-glucose = a 1,2-diacyl-3-O-(beta-D-Glc-(1-&gt;6)-beta-D-Glc)-sn-glycerol + UDP + H(+). It catalyses the reaction a 1,2-diacyl-3-O-(beta-D-Glc-(1-&gt;6)-beta-D-Glc)-sn-glycerol + UDP-alpha-D-glucose = a 1,2-diacyl-3-O-(beta-D-Glc-(1-&gt;6)-beta-D-Glc-(1-&gt;6)-beta-D-Glc)-sn-glycerol + UDP + H(+). The enzyme catalyses a 1,2-diacyl-sn-glycerol + UDP-alpha-D-glucose = a 1,2-diacyl-3-O-(beta-D-glucopyranosyl)-sn-glycerol + UDP + H(+). It participates in glycolipid metabolism; diglucosyl-diacylglycerol biosynthesis. Functionally, processive glucosyltransferase involved in the biosynthesis of both the bilayer- and non-bilayer-forming membrane glucolipids. Is able to successively transfer up to three glucosyl residues to diacylglycerol (DAG), thereby catalyzing the formation of beta-monoglucosyl-DAG (3-O-(beta-D-glucopyranosyl)-1,2-diacyl-sn-glycerol), beta-diglucosyl-DAG (3-O-(beta-D-glucopyranosyl-beta-(1-&gt;6)-D-glucopyranosyl)-1,2-diacyl-sn-glycerol) and beta-triglucosyl-DAG (3-O-(beta-D-glucopyranosyl-beta-(1-&gt;6)-D-glucopyranosyl-beta-(1-&gt;6)-D-glucopyranosyl)-1,2-diacyl-sn-glycerol). Beta-diglucosyl-DAG is the predominant glycolipid found in Bacillales and is also used as a membrane anchor for lipoteichoic acid (LTA). The polypeptide is Processive diacylglycerol beta-glucosyltransferase (Bacillus cereus (strain ATCC 14579 / DSM 31 / CCUG 7414 / JCM 2152 / NBRC 15305 / NCIMB 9373 / NCTC 2599 / NRRL B-3711)).